A 499-amino-acid polypeptide reads, in one-letter code: L-arabinose isomerase (499 aa).

Glu-306, Glu-333, His-350, and His-449 together coordinate Mn(2+).

Belongs to the arabinose isomerase family. Mn(2+) serves as cofactor.

The enzyme catalyses beta-L-arabinopyranose = L-ribulose. It participates in carbohydrate degradation; L-arabinose degradation via L-ribulose; D-xylulose 5-phosphate from L-arabinose (bacterial route): step 1/3. Catalyzes the conversion of L-arabinose to L-ribulose. The polypeptide is L-arabinose isomerase (Aeromonas hydrophila subsp. hydrophila (strain ATCC 7966 / DSM 30187 / BCRC 13018 / CCUG 14551 / JCM 1027 / KCTC 2358 / NCIMB 9240 / NCTC 8049)).